The primary structure comprises 215 residues: MOB kinase activator-like 1A (215 aa).

Residues 1-29 (MSLFGLGSRNQKTFRPKKSAPTGSKGAQL) are disordered. Positions 80, 85, 162, and 167 each coordinate Zn(2+).

Belongs to the MOB1/phocein family. Isoform 1 is constitutively expressed. Isoform 2 is specifically expressed in flowers bud during sporogenesis and gametogenesis.

It is found in the cytoplasm. It localises to the cytoskeleton. The protein resides in the phragmoplast. In Medicago sativa subsp. falcata (Sickle medic), this protein is MOB kinase activator-like 1A.